We begin with the raw amino-acid sequence, 553 residues long: Solute carrier family 22 member 12 (553 aa).

A helical membrane pass occupies residues 10-30 (VGGLGRFQLFQTVALVTPILW). Asparagine 56 carries an N-linked (GlcNAc...) asparagine glycan. Transmembrane regions (helical) follow at residues 146-166 (PMAQ…CGHA), 182-202 (LVSV…YCLF), 204-224 (FLLA…LMEW), 232-252 (LVMT…GSVA), 260-280 (MLQL…WWLP), 351-371 (IISM…ALDL), 378-398 (IFLL…GSLL), 412-432 (FLVL…GMGV), 435-455 (SALA…ITIF), 466-486 (MTAV…GPLV), and 495-515 (WMPL…ALLL). Phosphoserine is present on serine 534. Threonine 542 is subject to Phosphothreonine.

The protein belongs to the major facilitator (TC 2.A.1) superfamily. Organic cation transporter (TC 2.A.1.19) family. Interacts with PDZK1. In terms of processing, N-glycosylated. Detected in kidney (at protein level). Detected in kidney cortex, in proximal tubules.

The protein resides in the apical cell membrane. It carries out the reaction urate(out) + (S)-lactate(in) = urate(in) + (S)-lactate(out). It catalyses the reaction nicotinate(in) + urate(out) = nicotinate(out) + urate(in). The catalysed reaction is urate(out) + n chloride(in) = urate(in) + n chloride(out). The enzyme catalyses orotate(out) + nicotinate(in) = orotate(in) + nicotinate(out). Functionally, electroneutral antiporter that translocates urate across the apical membrane of proximal tubular cells in exchange for monovalent organic or inorganic anions. Involved in renal reabsorption of urate and helps maintaining blood levels of uric acid. Mediates urate uptake by an exchange with organic anions such as (S)-lactate and nicotinate, and inorganic anion Cl(-). Other inorganic anions such as Br(-), I(-) and NO3(-) may also act as counteranions that exchange for urate. Also mediates orotate tubular uptake coupled with nicotinate efflux and to a lesser extent with lactate efflux, therefore displaying a potential role in orotate renal reabsorption. Orotate transport is Cl(-)-dependent. The protein is Solute carrier family 22 member 12 of Mus musculus (Mouse).